Reading from the N-terminus, the 147-residue chain is 3-hydroxyacyl-[acyl-carrier-protein] dehydratase FabZ (147 aa).

Residue His49 is part of the active site.

This sequence belongs to the thioester dehydratase family. FabZ subfamily.

It localises to the cytoplasm. It carries out the reaction a (3R)-hydroxyacyl-[ACP] = a (2E)-enoyl-[ACP] + H2O. Its function is as follows. Involved in unsaturated fatty acids biosynthesis. Catalyzes the dehydration of short chain beta-hydroxyacyl-ACPs and long chain saturated and unsaturated beta-hydroxyacyl-ACPs. This chain is 3-hydroxyacyl-[acyl-carrier-protein] dehydratase FabZ, found in Alkaliphilus metalliredigens (strain QYMF).